A 296-amino-acid chain; its full sequence is tRNA dimethylallyltransferase (296 aa).

Position 9 to 16 (9 to 16 (GPTAVGKT)) interacts with ATP. 11–16 (TAVGKT) contributes to the substrate binding site. Positions 34 to 37 (DSRQ) are interaction with substrate tRNA.

The protein belongs to the IPP transferase family. Monomer. The cofactor is Mg(2+).

It catalyses the reaction adenosine(37) in tRNA + dimethylallyl diphosphate = N(6)-dimethylallyladenosine(37) in tRNA + diphosphate. Catalyzes the transfer of a dimethylallyl group onto the adenine at position 37 in tRNAs that read codons beginning with uridine, leading to the formation of N6-(dimethylallyl)adenosine (i(6)A). The sequence is that of tRNA dimethylallyltransferase from Chloroflexus aggregans (strain MD-66 / DSM 9485).